A 363-amino-acid polypeptide reads, in one-letter code: Aminomethyltransferase (363 aa).

It belongs to the GcvT family. In terms of assembly, the glycine cleavage system is composed of four proteins: P, T, L and H.

It carries out the reaction N(6)-[(R)-S(8)-aminomethyldihydrolipoyl]-L-lysyl-[protein] + (6S)-5,6,7,8-tetrahydrofolate = N(6)-[(R)-dihydrolipoyl]-L-lysyl-[protein] + (6R)-5,10-methylene-5,6,7,8-tetrahydrofolate + NH4(+). Functionally, the glycine cleavage system catalyzes the degradation of glycine. This chain is Aminomethyltransferase, found in Thioalkalivibrio sulfidiphilus (strain HL-EbGR7).